The chain runs to 96 residues: Aspartyl/glutamyl-tRNA(Asn/Gln) amidotransferase subunit C (96 aa).

It belongs to the GatC family. Heterotrimer of A, B and C subunits.

It carries out the reaction L-glutamyl-tRNA(Gln) + L-glutamine + ATP + H2O = L-glutaminyl-tRNA(Gln) + L-glutamate + ADP + phosphate + H(+). The catalysed reaction is L-aspartyl-tRNA(Asn) + L-glutamine + ATP + H2O = L-asparaginyl-tRNA(Asn) + L-glutamate + ADP + phosphate + 2 H(+). In terms of biological role, allows the formation of correctly charged Asn-tRNA(Asn) or Gln-tRNA(Gln) through the transamidation of misacylated Asp-tRNA(Asn) or Glu-tRNA(Gln) in organisms which lack either or both of asparaginyl-tRNA or glutaminyl-tRNA synthetases. The reaction takes place in the presence of glutamine and ATP through an activated phospho-Asp-tRNA(Asn) or phospho-Glu-tRNA(Gln). This Sulfurimonas denitrificans (strain ATCC 33889 / DSM 1251) (Thiomicrospira denitrificans (strain ATCC 33889 / DSM 1251)) protein is Aspartyl/glutamyl-tRNA(Asn/Gln) amidotransferase subunit C.